The sequence spans 454 residues: Bifunctional protein GlmU (454 aa).

Residues 1-226 form a pyrophosphorylase region; it reads MALNVVILAA…AIEVEGANNR (226 aa). Residues 8 to 11, Lys-22, Gln-73, 78 to 79, 100 to 102, Gly-137, Glu-151, Asn-166, and Asn-224 each bind UDP-N-acetyl-alpha-D-glucosamine; these read LAAG, GT, and YGD. Asp-102 lines the Mg(2+) pocket. Residue Asn-224 participates in Mg(2+) binding. Residues 227-247 are linker; the sequence is VQLAQLERAYQARAAEKLMLE. The interval 248–454 is N-acetyltransferase; sequence GANLRDPARI…GWPRPVKLKK (207 aa). Residues Arg-330 and Lys-348 each contribute to the UDP-N-acetyl-alpha-D-glucosamine site. The active-site Proton acceptor is His-360. UDP-N-acetyl-alpha-D-glucosamine-binding residues include Tyr-363 and Asn-374. Acetyl-CoA is bound by residues Ala-377, 383–384, Ser-402, Ala-420, and Arg-437; that span reads NY.

This sequence in the N-terminal section; belongs to the N-acetylglucosamine-1-phosphate uridyltransferase family. In the C-terminal section; belongs to the transferase hexapeptide repeat family. Homotrimer. It depends on Mg(2+) as a cofactor.

The protein resides in the cytoplasm. It catalyses the reaction alpha-D-glucosamine 1-phosphate + acetyl-CoA = N-acetyl-alpha-D-glucosamine 1-phosphate + CoA + H(+). It carries out the reaction N-acetyl-alpha-D-glucosamine 1-phosphate + UTP + H(+) = UDP-N-acetyl-alpha-D-glucosamine + diphosphate. It functions in the pathway nucleotide-sugar biosynthesis; UDP-N-acetyl-alpha-D-glucosamine biosynthesis; N-acetyl-alpha-D-glucosamine 1-phosphate from alpha-D-glucosamine 6-phosphate (route II): step 2/2. Its pathway is nucleotide-sugar biosynthesis; UDP-N-acetyl-alpha-D-glucosamine biosynthesis; UDP-N-acetyl-alpha-D-glucosamine from N-acetyl-alpha-D-glucosamine 1-phosphate: step 1/1. It participates in bacterial outer membrane biogenesis; LPS lipid A biosynthesis. Functionally, catalyzes the last two sequential reactions in the de novo biosynthetic pathway for UDP-N-acetylglucosamine (UDP-GlcNAc). The C-terminal domain catalyzes the transfer of acetyl group from acetyl coenzyme A to glucosamine-1-phosphate (GlcN-1-P) to produce N-acetylglucosamine-1-phosphate (GlcNAc-1-P), which is converted into UDP-GlcNAc by the transfer of uridine 5-monophosphate (from uridine 5-triphosphate), a reaction catalyzed by the N-terminal domain. In Shewanella woodyi (strain ATCC 51908 / MS32), this protein is Bifunctional protein GlmU.